A 400-amino-acid polypeptide reads, in one-letter code: F-box/LRR-repeat protein 14 (400 aa).

An F-box domain is found at 2-48 (ETHISCLFPELLAMIFGYLDVRDKGRAAQVCTAWRDAAYHKSVWRGV). The interval 2–48 (ETHISCLFPELLAMIFGYLDVRDKGRAAQVCTAWRDAAYHKSVWRGV) is required for down-regulation of SNAI1. 5 LRR repeats span residues 144–163 (GLEV…GLLL), 170–191 (RLKS…GHLA), 203–225 (GLEQ…HISR), 229–250 (GLRL…LHLS), and 254–275 (SLRS…MHLA).

Part of a SCF (SKP1-cullin-F-box) ubiquitin-protein ligase complex. Interacts with SKP1 and CUL1. Interacts with SNAI1; the interaction requires the phosphorylation of the two serine residues in the substrate destruction motif D-S-G-X(2,3,4)-S.

Its subcellular location is the cytoplasm. Its function is as follows. Substrate-recognition component of some SCF (SKP1-CUL1-F-box protein)-type E3 ubiquitin-protein ligase complexes. The SCF(FBXL14) complex acts by mediating ubiquitination and subsequent degradation of SNAI1. This Bos taurus (Bovine) protein is F-box/LRR-repeat protein 14 (FBXL14).